The chain runs to 429 residues: Adenylosuccinate synthetase (429 aa).

GTP-binding positions include 12–18 (GDEGKGK) and 40–42 (GHT). The active-site Proton acceptor is the Asp-13. Residues Asp-13 and Gly-40 each coordinate Mg(2+). IMP-binding positions include 13–16 (DEGK), 38–41 (NAGH), Thr-128, Arg-142, Gln-223, Thr-238, and Arg-302. Catalysis depends on His-41, which acts as the Proton donor. Residue 298 to 304 (VNTGRPR) participates in substrate binding. Residues Arg-304, 330–332 (KLD), and 412–414 (GVG) contribute to the GTP site.

It belongs to the adenylosuccinate synthetase family. In terms of assembly, homodimer. Mg(2+) is required as a cofactor.

Its subcellular location is the cytoplasm. The catalysed reaction is IMP + L-aspartate + GTP = N(6)-(1,2-dicarboxyethyl)-AMP + GDP + phosphate + 2 H(+). Its pathway is purine metabolism; AMP biosynthesis via de novo pathway; AMP from IMP: step 1/2. Its function is as follows. Plays an important role in the de novo pathway of purine nucleotide biosynthesis. Catalyzes the first committed step in the biosynthesis of AMP from IMP. The sequence is that of Adenylosuccinate synthetase from Arthrobacter sp. (strain FB24).